Here is a 173-residue protein sequence, read N- to C-terminus: Crossover junction endodeoxyribonuclease RuvC (173 aa).

Active-site residues include Asp-8, Glu-67, and Asp-139. Residues Asp-8, Glu-67, and Asp-139 each contribute to the Mg(2+) site.

Belongs to the RuvC family. In terms of assembly, homodimer which binds Holliday junction (HJ) DNA. The HJ becomes 2-fold symmetrical on binding to RuvC with unstacked arms; it has a different conformation from HJ DNA in complex with RuvA. In the full resolvosome a probable DNA-RuvA(4)-RuvB(12)-RuvC(2) complex forms which resolves the HJ. The cofactor is Mg(2+).

It is found in the cytoplasm. The enzyme catalyses Endonucleolytic cleavage at a junction such as a reciprocal single-stranded crossover between two homologous DNA duplexes (Holliday junction).. In terms of biological role, the RuvA-RuvB-RuvC complex processes Holliday junction (HJ) DNA during genetic recombination and DNA repair. Endonuclease that resolves HJ intermediates. Cleaves cruciform DNA by making single-stranded nicks across the HJ at symmetrical positions within the homologous arms, yielding a 5'-phosphate and a 3'-hydroxyl group; requires a central core of homology in the junction. The consensus cleavage sequence is 5'-(A/T)TT(C/G)-3'. Cleavage occurs on the 3'-side of the TT dinucleotide at the point of strand exchange. HJ branch migration catalyzed by RuvA-RuvB allows RuvC to scan DNA until it finds its consensus sequence, where it cleaves and resolves the cruciform DNA. The protein is Crossover junction endodeoxyribonuclease RuvC of Photobacterium profundum (strain SS9).